A 184-amino-acid chain; its full sequence is Large ribosomal subunit protein uL6 (184 aa).

Belongs to the universal ribosomal protein uL6 family. As to quaternary structure, part of the 50S ribosomal subunit.

Functionally, this protein binds to the 23S rRNA, and is important in its secondary structure. It is located near the subunit interface in the base of the L7/L12 stalk, and near the tRNA binding site of the peptidyltransferase center. This is Large ribosomal subunit protein uL6 from Mycoplasma pneumoniae (strain ATCC 29342 / M129 / Subtype 1) (Mycoplasmoides pneumoniae).